The primary structure comprises 372 residues: Glutamate 5-kinase (372 aa).

Lys14 contacts ATP. Residues Ser54, Asp141, and Asn153 each coordinate substrate. ATP is bound by residues 173–174 (TD) and 215–221 (TGGMLTK). A PUA domain is found at 280-358 (AGRLVLDDGA…RDIERLLGYV (79 aa)).

The protein belongs to the glutamate 5-kinase family.

The protein localises to the cytoplasm. The catalysed reaction is L-glutamate + ATP = L-glutamyl 5-phosphate + ADP. It participates in amino-acid biosynthesis; L-proline biosynthesis; L-glutamate 5-semialdehyde from L-glutamate: step 1/2. In terms of biological role, catalyzes the transfer of a phosphate group to glutamate to form L-glutamate 5-phosphate. The chain is Glutamate 5-kinase from Laribacter hongkongensis (strain HLHK9).